Here is a 42-residue protein sequence, read N- to C-terminus: MDNNFLKYLSTAPVLLTIWLSFTAALVIEANRFYPDMLYFPI.

Residues 8–28 form a helical membrane-spanning segment; the sequence is YLSTAPVLLTIWLSFTAALVI.

This sequence belongs to the PsaJ family.

It is found in the plastid. It localises to the chloroplast thylakoid membrane. May help in the organization of the PsaE and PsaF subunits. The protein is Photosystem I reaction center subunit IX of Guillardia theta (Cryptophyte).